Reading from the N-terminus, the 103-residue chain is Large ribosomal subunit protein uL22c (103 aa).

It belongs to the universal ribosomal protein uL22 family. In terms of assembly, part of the 50S ribosomal subunit.

The protein resides in the plastid. It is found in the chloroplast. Functionally, this protein binds specifically to 23S rRNA. The globular domain of the protein is located near the polypeptide exit tunnel on the outside of the subunit, while an extended beta-hairpin is found that lines the wall of the exit tunnel in the center of the 70S ribosome. This chain is Large ribosomal subunit protein uL22c (rpl22), found in Cyanidium caldarium (Red alga).